The following is a 601-amino-acid chain: Tubulin polyglutamylase ttll-4 (601 aa).

Residues 1–18 are compositionally biased toward polar residues; that stretch reads MSSGYSSAPSVSHTSSDT. Residues 1–37 form a disordered region; the sequence is MSSGYSSAPSVSHTSSDTDLNRIDSYDDGAEETTDEQ. Residues 138–476 enclose the TTL domain; it reads QARLTWCHNS…YVPPSFDKLS (339 aa). Residues lysine 254, 260–261, 282–285, and 295–297 each bind ATP; these read RG, QHYI, and KFD. Residue arginine 260 coordinates a protein. Position 321 (arginine 321) interacts with L-glutamate. Residue 342-343 participates in ATP binding; sequence TN. Residues tyrosine 344, serine 345, and lysine 362 each contribute to the L-glutamate site. Mg(2+) contacts are provided by aspartate 422, glutamate 435, and asparagine 437. Lysine 453 provides a ligand contact to L-glutamate.

It belongs to the tubulin--tyrosine ligase family. Requires Mg(2+) as cofactor. As to expression, expressed in many sensory neurons in amphid.

It carries out the reaction L-glutamyl-[protein] + L-glutamate + ATP = gamma-L-glutamyl-L-glutamyl-[protein] + ADP + phosphate + H(+). In terms of biological role, monoglutamylase which modifies tubulin, adding a single glutamate on the gamma-carboxyl group of specific glutamate residues of target proteins. Involved in the side-chain initiation step of the polyglutamylation reaction but not in the elongation step. Preferentially modifies beta-tail tubulin over the alpha-tubulin. Involved in side-chain glutamylation of tubulin in sensory cilia. Together with ttll-5 and ttll-11, required for male mating. This is Tubulin polyglutamylase ttll-4 from Caenorhabditis elegans.